The primary structure comprises 598 residues: Elongation factor 4 (598 aa).

The region spanning 4 to 186 (DHIRNFSIIA…AIVKRVPPPK (183 aa)) is the tr-type G domain. GTP contacts are provided by residues 16–21 (DHGKST) and 133–136 (NKID).

Belongs to the TRAFAC class translation factor GTPase superfamily. Classic translation factor GTPase family. LepA subfamily.

The protein resides in the cell inner membrane. The enzyme catalyses GTP + H2O = GDP + phosphate + H(+). In terms of biological role, required for accurate and efficient protein synthesis under certain stress conditions. May act as a fidelity factor of the translation reaction, by catalyzing a one-codon backward translocation of tRNAs on improperly translocated ribosomes. Back-translocation proceeds from a post-translocation (POST) complex to a pre-translocation (PRE) complex, thus giving elongation factor G a second chance to translocate the tRNAs correctly. Binds to ribosomes in a GTP-dependent manner. The sequence is that of Elongation factor 4 from Magnetococcus marinus (strain ATCC BAA-1437 / JCM 17883 / MC-1).